A 255-amino-acid polypeptide reads, in one-letter code: TIR domain-containing protein (255 aa).

The 177-residue stretch at 9 to 185 (LSDQVFINFR…DIVKEVKKQL (177 aa)) folds into the TIR domain. Glu-83 is a catalytic residue. Helical transmembrane passes span 195–215 (AIGVAFLAITINLIFSFFIAP) and 223–243 (FFQTPEWFIGTLAVVLASWFW). One can recognise a KASH domain in the interval 201-255 (LAITINLIFSFFIAPKYLPDQKFFQTPEWFIGTLAVVLASWFWYKNNQNKAPPPS).

Forms homomers. Interacts with SUN1, SUN2, SUN3, SUN4 and SUN5.

The protein localises to the nucleus membrane. It catalyses the reaction NAD(+) + H2O = ADP-D-ribose + nicotinamide + H(+). Functionally, could play a role in nuclear morphology, specifically nuclear size. The protein is TIR domain-containing protein of Arabidopsis thaliana (Mouse-ear cress).